A 264-amino-acid polypeptide reads, in one-letter code: uncharacterized protein (264 aa).

Residues 1 to 22 (MGYLKKLALFISVIILGIFIIG) form the signal peptide. The N-palmitoyl cysteine moiety is linked to residue Cys-23. A lipid anchor (S-diacylglycerol cysteine) is attached at Cys-23.

It belongs to the staphylococcal tandem lipoprotein family.

Its subcellular location is the cell membrane. This is an uncharacterized protein from Staphylococcus aureus (strain N315).